Consider the following 464-residue polypeptide: Citrate synthase, mitochondrial (464 aa).

The N-terminal 27 residues, 1-27, are a transit peptide targeting the mitochondrion; sequence MALLTAAARLFGAKNASCLVLAARHAS. The SIFI-degron signature appears at 2 to 21; it reads ALLTAAARLFGAKNASCLVL. Residue lysine 76 is modified to N6-acetyllysine; alternate. Lysine 76 is subject to N6-succinyllysine; alternate. N6-succinyllysine is present on residues lysine 103 and lysine 193. Phosphoserine is present on serine 226. Residue histidine 301 is part of the active site. N6-acetyllysine; alternate is present on residues lysine 321 and lysine 327. N6-succinyllysine; alternate is present on residues lysine 321 and lysine 327. Histidine 347 is a catalytic residue. Arginine 356 is a binding site for oxaloacetate. Residue lysine 375 is modified to N6-acetyllysine; alternate. At lysine 375 the chain carries N6-succinyllysine; alternate. Position 382 is an N6-acetyllysine (lysine 382). N6-acetyllysine; alternate is present on lysine 393. Position 393 is an N6-succinyllysine; alternate (lysine 393). The residue at position 395 (lysine 395) is an N6,N6,N6-trimethyllysine. Aspartate 402 is an active-site residue. Positions 428 and 448 each coordinate oxaloacetate. An N6-succinyllysine modification is found at lysine 450. N6-acetyllysine; alternate is present on lysine 459. An N6-succinyllysine; alternate modification is found at lysine 459.

It belongs to the citrate synthase family. Homodimer. Methylated. Trimethylation at Lys-395 by CSKMT decreases citrate synthase activity. In terms of processing, in response to mitochondrial stress, the precursor protein is ubiquitinated by the SIFI complex in the cytoplasm before mitochondrial import, leading to its degradation. Within the SIFI complex, UBR4 initiates ubiquitin chain that are further elongated or branched by KCMF1.

It is found in the mitochondrion matrix. The enzyme catalyses oxaloacetate + acetyl-CoA + H2O = citrate + CoA + H(+). It functions in the pathway carbohydrate metabolism; tricarboxylic acid cycle; isocitrate from oxaloacetate: step 1/2. In terms of biological role, key enzyme of the Krebs tricarboxylic acid cycle which catalyzes the synthesis of citrate from acetyl coenzyme A and oxaloacetate. The chain is Citrate synthase, mitochondrial (CS) from Sus scrofa (Pig).